A 700-amino-acid chain; its full sequence is Dymeclin (700 aa).

Gly-2 is lipidated: N-myristoyl glycine. The residue at position 347 (Ser-347) is a Phosphoserine.

The protein belongs to the dymeclin family.

The polypeptide is Dymeclin (Drosophila pseudoobscura pseudoobscura (Fruit fly)).